The chain runs to 386 residues: uncharacterized protein (386 aa).

Belongs to the TelA family.

This is an uncharacterized protein from Bacillus subtilis (strain 168).